We begin with the raw amino-acid sequence, 234 residues long: UPF0758 protein Smlt0399 (234 aa).

The MPN domain maps to 103 to 225 (VGNNPAAVGR…PVSFAERGLL (123 aa)). Residues His-174, His-176, and Asp-187 each contribute to the Zn(2+) site. Residues 174–187 (HNHPSGDPEPSSAD) carry the JAMM motif motif.

Belongs to the UPF0758 family.

This Stenotrophomonas maltophilia (strain K279a) protein is UPF0758 protein Smlt0399.